A 617-amino-acid chain; its full sequence is Transmembrane protein 232 (617 aa).

Residues 129-149 (LVKIGYLIFLRLFVFFLHGHL) form a helical membrane-spanning segment. Residues 567–604 (LKQIEAVCEAQNRKDEEEKEKIRFQEIMKQRERKLNKQ) are a coiled coil. The disordered stretch occupies residues 598–617 (ERKLNKQTKPYEITPSEKKE).

The protein localises to the membrane. Plays a critical role for male fertility and sperm motility by regulating sperm cytoplasm removal and maintaining axoneme integrity. The sequence is that of Transmembrane protein 232 (Tmem232) from Rattus norvegicus (Rat).